The following is a 333-amino-acid chain: Ornithine carbamoyltransferase (333 aa).

Residues 56–59, Gln-83, Arg-107, and 134–137 contribute to the carbamoyl phosphate site; these read STRT and HPTQ. Residues Asn-167, Asp-231, and 235-236 each bind L-ornithine; that span reads SM. Carbamoyl phosphate contacts are provided by residues 273–274 and Arg-318; that span reads CL.

The protein belongs to the aspartate/ornithine carbamoyltransferase superfamily. OTCase family.

Its subcellular location is the cytoplasm. It catalyses the reaction carbamoyl phosphate + L-ornithine = L-citrulline + phosphate + H(+). Its pathway is amino-acid biosynthesis; L-arginine biosynthesis; L-arginine from L-ornithine and carbamoyl phosphate: step 1/3. Reversibly catalyzes the transfer of the carbamoyl group from carbamoyl phosphate (CP) to the N(epsilon) atom of ornithine (ORN) to produce L-citrulline. This chain is Ornithine carbamoyltransferase, found in Staphylococcus aureus (strain MSSA476).